Here is a 273-residue protein sequence, read N- to C-terminus: Oligodendrocyte transcription factor 3 (273 aa).

Low complexity predominate over residues 1-14; the sequence is MNSDSSSVSSRASS. Residues 1–72 are disordered; it reads MNSDSSSVSS…KAAGESSKYK (72 aa). Positions 24-34 are enriched in basic residues; sequence DHHHRHHHHHQ. A compositionally biased stretch (polar residues) spans 37 to 47; that stretch reads RLNSVSSTQGD. Positions 69 to 90 form a coiled coil; the sequence is SKYKIKKQLSEQDLQQLRLKIN. Residues 84 to 138 enclose the bHLH domain; the sequence is QLRLKINGRERKRMHDLNLAMDGLREVMPYAHGPSVRKLSKIATLLLARNYILML.

In terms of tissue distribution, weakly expressed, mainly in non-neural tissues.

It localises to the nucleus. Functionally, may determine the distinct specification program of class A neurons in the dorsal part of the spinal cord and suppress specification of class B neurons. In Mus musculus (Mouse), this protein is Oligodendrocyte transcription factor 3 (Olig3).